A 143-amino-acid chain; its full sequence is Antiholin-like protein LrgA (143 aa).

Transmembrane regions (helical) follow at residues Val-6–Ile-26, Leu-30–Leu-50, Leu-61–Ile-81, and Val-97–Leu-117.

Belongs to the CidA/LrgA family. LrgA subfamily.

The protein resides in the cell membrane. In terms of biological role, inhibits the expression or activity of extracellular murein hydrolases by interacting, possibly with LrgB, with the holin-like protein CidA. The LrgAB and CidA proteins may affect the proton motive force of the membrane. May be involved in programmed cell death (PCD), possibly triggering PCD in response to antibiotics and environmental stresses. The sequence is that of Antiholin-like protein LrgA from Bacillus anthracis (strain A0248).